We begin with the raw amino-acid sequence, 472 residues long: F420-non-reducing hydrogenase subunit A (472 aa).

Residues Cys61, Cys64, Cys442, and Cys445 each contribute to the Ni(2+) site.

This sequence belongs to the [NiFe]/[NiFeSe] hydrogenase large subunit family. In terms of assembly, the F420-non-reducing hydrogenase is composed of three subunits; MvhA, MvhD and MvhG. It forms a complex with the heterodisulfide reductase (hdr). Requires Ni(2+) as cofactor.

In terms of biological role, part of a complex that provides reducing equivalents for heterodisulfide reductase. The polypeptide is F420-non-reducing hydrogenase subunit A (mvhA) (Methanothermobacter marburgensis (strain ATCC BAA-927 / DSM 2133 / JCM 14651 / NBRC 100331 / OCM 82 / Marburg) (Methanobacterium thermoautotrophicum)).